A 2907-amino-acid chain; its full sequence is Fibrillin-2 (2907 aa).

An N-terminal signal peptide occupies residues 1–28; sequence MGRRRRLCLQPYFVWLGCVALWAQGTDG. Residues 26-58 are disordered; sequence TDGQPQPPPPKTLRPQPPPQQVRPAVAGSEGGF. The propeptide occupies 29-77; the sequence is QPQPPPPKTLRPQPPPQQVRPAVAGSEGGFMGPEYRDEGAVAASRVRRR. The segment covering 30–46 has biased composition (pro residues); sequence PQPPPPKTLRPQPPPQQ. EGF-like domains lie at 111–142, 145–176, and 176–208; these read IVPI…PTCG, SIQQ…TYCG, and GQPV…PQCE. Disulfide bonds link Cys115–Cys124, Cys119–Cys130, Cys132–Cys141, Cys149–Cys159, Cys153–Cys164, Cys166–Cys175, Cys180–Cys190, Cys184–Cys196, and Cys198–Cys207. Residues 149 to 359 form an interaction with MFAP4 region; sequence CSVRCMNGGT…VTSTDGSRCI (211 aa). Positions 214-266 constitute a TB 1 domain; it reads GPCFTQVNNQMCQGQLTGIVCTKTLCCATIGRAWGHPCEMCPAQPQPCRRGFI. The region spanning 276-317 is the EGF-like 4; calcium-binding domain; the sequence is DVDECQAIPGLCQGGNCINTVGSFECRCPAGHKQSETTQKCE. 6 disulfide bridges follow: Cys280-Cys292, Cys287-Cys301, Cys303-Cys316, Cys322-Cys334, Cys329-Cys343, and Cys345-Cys358. Ser298 carries an O-linked (Glc) serine glycan. The region spanning 318 to 359 is the EGF-like 5; calcium-binding domain; sequence DIDECSVIPGVCETGDCSNTVGSYFCLCPRGFVTSTDGSRCI. Ser340 is a glycosylation site (O-linked (Glc) serine). The region spanning 364 to 417 is the TB 2 domain; sequence GTCFSGLVNGRCAQELPGRMAKAQCCCEPGRCWSIGTIPEACPVRGSEEYRRLC. N-linked (GlcNAc...) asparagine glycosylation occurs at Asn485. The EGF-like 6 domain maps to 487-527; that stretch reads TIDICKHHANLCLNGRCIPTVSSYRCECNMGYKQDANGDCI. 15 disulfides stabilise this stretch: Cys491/Cys503, Cys498/Cys512, Cys514/Cys526, Cys532/Cys542, Cys537/Cys551, Cys553/Cys566, Cys572/Cys584, Cys579/Cys593, Cys595/Cys608, Cys614/Cys625, Cys620/Cys634, Cys636/Cys649, Cys655/Cys666, Cys661/Cys675, and Cys677/Cys690. Ser509 is a glycosylation site (O-linked (Glc) serine). The 40-residue stretch at 528-567 folds into the EGF-like 7; calcium-binding domain; that stretch reads DVDECTSNPCSNGDCVNTPGSYYCKCHAGFQRTPTKQACI. Residue Ser548 is glycosylated (O-linked (Glc) serine). Residues 568 to 609 form the EGF-like 8; calcium-binding domain; the sequence is DIDECIQNGVLCKNGRCVNTDGSFQCICNAGFELTTDGKNCV. Ser590 carries O-linked (Glc) serine glycosylation. In terms of domain architecture, EGF-like 9; calcium-binding spans 610-650; it reads DHDECTTTNMCLNGMCINEDGSFKCVCKPGFILAPNGRYCT. O-linked (Glc) serine glycosylation is present at Ser631. The 41-residue stretch at 651 to 691 folds into the EGF-like 10; calcium-binding domain; the sequence is DVDECQTPGICMNGHCINNEGSFRCDCPPGLAVGVDGRVCV. The O-linked (Glc) serine glycan is linked to Ser672. One can recognise a TB 3 domain in the interval 697 to 749; it reads STCYGEIKKGVCVRPFPGAVTKSECCCANPDYGFGEPCQPCPAKNSAEFHGLC. Residues 761-802 enclose the EGF-like 11; calcium-binding domain; sequence DINECALDPDICANGICENLRGSYRCNCNSGYEPDASGRNCI. 9 disulfide bridges follow: Cys765–Cys777, Cys772–Cys786, Cys788–Cys801, Cys807–Cys819, Cys814–Cys828, Cys830–Cys843, Cys849–Cys859, Cys854–Cys868, and Cys870–Cys883. An EGF-like 12; calcium-binding domain is found at 803-844; the sequence is DIDECLVNRLLCDNGLCRNTPGSYSCTCPPGYVFRTETETCE. A glycan (O-linked (Glc) serine) is linked at Ser825. The EGF-like 13; calcium-binding domain occupies 845 to 883; that stretch reads DVNECESNPCVNGACRNNLGSFHCECSPGSKLSSTGLIC. Residue Ser865 is glycosylated (O-linked (Glc) serine). One can recognise a TB 4 domain in the interval 889–940; the sequence is GTCWLNIQDNRCEVNINGATLKSECCATLGAAWGSPCERCELDAACPRGFAR. The region spanning 948–989 is the EGF-like 14; calcium-binding domain; the sequence is DVNECEVFPGVCPNGRCVNSKGSFHCECPEGLTLDGTGRVCL. Intrachain disulfides connect Cys952–Cys964, Cys959–Cys973, and Cys975–Cys988. Ser970 is a glycosylation site (O-linked (Glc) serine). A TB 5 domain is found at 994-1045; it reads EHCFLKWDEDECIHPVPGKFRMDACCCAVGAAWGTECEECPKPGTKEYETLC. In terms of domain architecture, EGF-like 15; calcium-binding spans 1066 to 1107; the sequence is DINECKAFPGMCTYGKCRNTIGSFKCRCNNGFALDMEERNCT. Cystine bridges form between Cys1070-Cys1082, Cys1077-Cys1091, Cys1093-Cys1106, Cys1112-Cys1124, Cys1119-Cys1133, Cys1135-Cys1149, Cys1155-Cys1167, Cys1162-Cys1176, Cys1178-Cys1191, Cys1197-Cys1209, Cys1204-Cys1218, Cys1220-Cys1233, Cys1239-Cys1250, Cys1246-Cys1259, Cys1261-Cys1274, Cys1280-Cys1292, Cys1287-Cys1301, Cys1303-Cys1316, Cys1322-Cys1334, Cys1329-Cys1343, Cys1345-Cys1358, Cys1364-Cys1377, Cys1371-Cys1386, Cys1388-Cys1399, Cys1405-Cys1418, Cys1412-Cys1427, Cys1429-Cys1440, Cys1446-Cys1458, Cys1453-Cys1467, Cys1469-Cys1482, Cys1488-Cys1499, Cys1494-Cys1508, Cys1510-Cys1523, Cys1529-Cys1540, Cys1535-Cys1549, and Cys1551-Cys1564. Residue Ser1088 is glycosylated (O-linked (Glc) serine). Asn1105 carries N-linked (GlcNAc...) asparagine glycosylation. Positions 1108-1150 constitute an EGF-like 16; calcium-binding domain; that stretch reads DIDECRISPDLCGSGICVNTPGSFECECFEGYESGFMMMKNCM. The region spanning 1151-1192 is the EGF-like 17; calcium-binding domain; that stretch reads DIDECERNPLLCRGGTCVNTEGSFQCDCPLGHELSPSREDCV. Ser1173 is a glycosylation site (O-linked (Glc) serine). The region spanning 1193–1234 is the EGF-like 18; calcium-binding domain; sequence DINECSLSDNLCRNGKCVNMIGTYQCSCNPGYQATPDRQGCT. Thr1215 carries an O-linked (Glc) threonine glycan. One can recognise an EGF-like 19; calcium-binding domain in the interval 1235–1275; that stretch reads DIDECMIMNGGCDTQCTNSEGSYECSCSEGYALMPDGRSCA. An O-linked (Glc) serine glycan is attached at Ser1256. Residues 1276 to 1317 form the EGF-like 20; calcium-binding domain; it reads DIDECENNPDICDGGQCTNIPGEYRCLCYDGFMASMDMKTCI. Residues 1318–1359 enclose the EGF-like 21; calcium-binding domain; sequence DVNECDLNPNICMFGECENTKGSFICHCQLGYSVKKGTTGCT. O-linked (Glc) serine glycosylation occurs at Ser1340. One can recognise an EGF-like 22; calcium-binding domain in the interval 1360–1400; sequence DVDECEIGAHNCDMHASCLNVPGSFKCSCREGWVGNGIKCI. A glycan (O-linked (Glc) serine) is linked at Ser1383. Residues 1401–1441 enclose the EGF-like 23; calcium-binding domain; sequence DLDECANGTHQCSINAQCVNTPGSYRCACSEGFTGDGFTCS. Asn1407 is a glycosylation site (N-linked (GlcNAc...) asparagine). The region spanning 1442–1483 is the EGF-like 24; calcium-binding domain; sequence DVDECAENTNLCENGQCLNVPGAYRCECEMGFTPASDSRSCQ. Residues 1484–1524 form the EGF-like 25; calcium-binding domain; it reads DIDECSFQNICVFGTCNNLPGMFHCICDDGYELDRTGGNCT. N-linked (GlcNAc...) asparagine glycosylation is present at Asn1522. In terms of domain architecture, EGF-like 26; calcium-binding spans 1525-1565; sequence DIDECADPINCVNGLCVNTPGRYECNCPPDFQLNPTGVGCV. The region spanning 1570 to 1626 is the TB 6 domain; it reads GNCYLKFGPRGDGSLSCNTEVGVGVSRSSCCCSLGKAWGNPCETCPPVNSTEYYTLC. Asn1618 is a glycosylation site (N-linked (GlcNAc...) asparagine). One can recognise an EGF-like 27; calcium-binding domain in the interval 1643-1684; the sequence is DIDECQELPGLCQGGNCINTFGSFQCECPQGYYLSEETRICE. Disulfide bonds link Cys1647–Cys1659, Cys1654–Cys1668, Cys1670–Cys1683, Cys1689–Cys1701, Cys1696–Cys1710, and Cys1712–Cys1725. O-linked (Glc) serine glycosylation occurs at Ser1665. The 42-residue stretch at 1685 to 1726 folds into the EGF-like 28; calcium-binding domain; it reads DIDECFAHPGVCGPGTCYNTLGNYTCICPPEYMQVNGGHNCM. Asn1707 is a glycosylation site (N-linked (GlcNAc...) asparagine). The segment at 1728-2164 is interaction with MFAP4; it reads MRKSFCYRSY…VPSLHDTRED (437 aa). The TB 7 domain occupies 1731–1784; it reads SFCYRSYNGTTCENELPFNVTKRMCCCTYNVGKAWNKPCEPCPTPGTADFKTIC. Asn1738 and Asn1749 each carry an N-linked (GlcNAc...) asparagine glycan. One can recognise an EGF-like 29; calcium-binding domain in the interval 1801–1842; the sequence is DIDECKEIPGICANGVCINQIGSFRCECPTGFSYNDLLLVCE. 21 cysteine pairs are disulfide-bonded: Cys1805–Cys1817, Cys1812–Cys1826, Cys1828–Cys1841, Cys1847–Cys1860, Cys1854–Cys1869, Cys1871–Cys1883, Cys1889–Cys1901, Cys1896–Cys1910, Cys1912–Cys1925, Cys1931–Cys1941, Cys1936–Cys1950, Cys1952–Cys1964, Cys1970–Cys1983, Cys1978–Cys1992, Cys1994–Cys2007, Cys2013–Cys2025, Cys2020–Cys2034, Cys2036–Cys2047, Cys2053–Cys2065, Cys2060–Cys2074, and Cys2076–Cys2089. Residues 1843 to 1884 form the EGF-like 30; calcium-binding domain; it reads DIDECSNGDNLCQRNADCINSPGSYRCECAAGFKLSPNGACV. O-linked (Glc) serine glycosylation occurs at Ser1866. The EGF-like 31; calcium-binding domain maps to 1885-1926; that stretch reads DRNECLEIPNVCSHGLCVDLQGSYQCICNNGFKASQDQTMCM. The EGF-like 32; calcium-binding domain maps to 1927–1965; that stretch reads DVDECERHPCGNGTCKNTVGSYNCLCYPGFELTHNNDCL. N-linked (GlcNAc...) asparagine glycosylation is present at Asn1938. Residue Ser1947 is glycosylated (O-linked (Glc) serine). Residues 1966–2008 form the EGF-like 33; calcium-binding domain; that stretch reads DIDECSSFFGQVCRNGRCFNEIGSFKCLCNEGYELTPDGKNCI. O-linked (Glc) serine glycosylation occurs at Ser1989. In terms of domain architecture, EGF-like 34; calcium-binding spans 2009–2048; it reads DTNECVALPGSCSPGTCQNLEGSFRCICPPGYEVRSENCI. An EGF-like 35; calcium-binding domain is found at 2049–2090; that stretch reads DINECDEDPNICLFGSCTNTPGGFQCICPPGFVLSDNGRRCF. A TB 8 domain is found at 2095–2148; it reads SFCFTNFENGKCSVPKAFNTTKAKCCCSKMPGEGWGDPCELCPKDDEVAFQDLC. Asn2113 is a glycosylation site (N-linked (GlcNAc...) asparagine). Positions 2164-2205 constitute an EGF-like 36; calcium-binding domain; sequence DVNECLESPGICSNGQCINTDGSFRCECPMGYNLDYTGVRCV. 15 disulfide bridges follow: Cys2168–Cys2180, Cys2175–Cys2189, Cys2191–Cys2204, Cys2210–Cys2221, Cys2216–Cys2230, Cys2232–Cys2244, Cys2250–Cys2261, Cys2257–Cys2270, Cys2272–Cys2285, Cys2291–Cys2305, Cys2298–Cys2314, Cys2316–Cys2329, Cys2335–Cys2347, Cys2342–Cys2356, and Cys2358–Cys2371. Residue Ser2186 is glycosylated (O-linked (Glc) serine). The region spanning 2206–2245 is the EGF-like 37; calcium-binding domain; sequence DTDECSIGNPCGNGTCTNVIGSFECTCNEGFEPGPMMNCE. Asn2218 carries an N-linked (GlcNAc...) asparagine glycan. The EGF-like 38; calcium-binding domain occupies 2246 to 2286; the sequence is DINECAQNPLLCAFRCMNTFGSYECTCPVGYALREDQKMCK. Ser2267 is a glycosylation site (O-linked (Glc) serine). In terms of domain architecture, EGF-like 39; calcium-binding spans 2287–2330; the sequence is DLDECAEGLHDCESRGMMCKNLIGTFMCICPPGMARRPDGEGCV. The EGF-like 40; calcium-binding domain occupies 2331-2372; that stretch reads DENECRTKPGICENGRCVNIIGSYRCECNEGFQSSSSGTECL. An O-linked (Glc) serine glycan is attached at Ser2353. The TB 9 domain occupies 2377–2430; the sequence is GLCFAEVLQTMCQMASSSRNLVTKSECCCDGGRGWGHQCELCPLPGTAQYKKIC. In terms of domain architecture, EGF-like 41; calcium-binding spans 2442 to 2483; that stretch reads DIDECKVMPSLCTNGQCVNTMGSFRCFCKVGYTTDISGTACV. 21 cysteine pairs are disulfide-bonded: Cys2446–Cys2458, Cys2453–Cys2467, Cys2469–Cys2482, Cys2488–Cys2499, Cys2495–Cys2508, Cys2510–Cys2523, Cys2529–Cys2540, Cys2536–Cys2549, Cys2551–Cys2562, Cys2568–Cys2581, Cys2575–Cys2590, Cys2592–Cys2605, Cys2611–Cys2621, Cys2617–Cys2630, Cys2632–Cys2645, Cys2651–Cys2662, Cys2657–Cys2671, Cys2673–Cys2686, Cys2692–Cys2703, Cys2699–Cys2712, and Cys2714–Cys2726. Ser2464 carries an O-linked (Glc) serine glycan. Residues 2484–2524 form the EGF-like 42; calcium-binding domain; the sequence is DLDECSQSPKPCNFICKNTKGSYQCSCPRGYVLQEDGKTCK. A glycan (O-linked (Glc) serine) is linked at Ser2505. Residues 2525–2563 form the EGF-like 43; calcium-binding domain; the sequence is DLDECQTKQHNCQFLCVNTLGGFTCKCPPGFTQHHTACI. An EGF-like 44; calcium-binding domain is found at 2564 to 2606; sequence DNNECGSQPSLCGAKGICQNTPGSFSCECQRGFSLDASGLNCE. Ser2587 is a glycosylation site (O-linked (Glc) serine). Positions 2607–2646 constitute an EGF-like 45; calcium-binding domain; it reads DVDECDGNHRCQHGCQNILGGYRCGCPQGYVQHYQWNQCV. The 41-residue stretch at 2647 to 2687 folds into the EGF-like 46; calcium-binding domain; it reads DENECSNPGACGSASCYNTLGSYKCACPSGFSFDQFSSACH. A glycan (O-linked (Glc) serine) is linked at Ser2668. Residues 2688–2727 enclose the EGF-like 47; calcium-binding domain; it reads DVNECSSSKNPCSYGCSNTEGGYLCGCPPGYFRVGQGHCV. Asn2803 carries N-linked (GlcNAc...) asparagine glycosylation.

Belongs to the fibrillin family. As to quaternary structure, interacts with BMP2, BMP4, BMP7, BMP10 and GDF5. Interacts with MFAP2 and MFAP5. Interacts with ADAMTSL5. Interacts with MFAP4. Post-translationally, N-glycosylated. O-glycosylated on serine residues by POGLUT2 and POGLUT3. In terms of tissue distribution, widely expressed.

The protein resides in the secreted. The protein localises to the extracellular space. It is found in the extracellular matrix. Functionally, fibrillins are structural components of 10-12 nm extracellular calcium-binding microfibrils, which occur either in association with elastin or in elastin-free bundles. Fibrillin-2-containing microfibrils regulate the early process of elastic fiber assembly. Regulates osteoblast maturation by controlling TGF-beta bioavailability and calibrating TGF-beta and BMP levels, respectively. Hormone secreted by trophoblasts that promotes trophoblast invasiveness. Has glucogenic activity: is able to increase plasma glucose levels. This chain is Fibrillin-2, found in Mus musculus (Mouse).